Reading from the N-terminus, the 168-residue chain is ATP synthase subunit b, chloroplastic (168 aa).

A helical transmembrane segment spans residues 20-37 (LNLAVVLPIVFTLGRDTL).

The protein belongs to the ATPase B chain family. As to quaternary structure, F-type ATPases have 2 components, F(1) - the catalytic core - and F(0) - the membrane proton channel. F(1) has five subunits: alpha(3), beta(3), gamma(1), delta(1), epsilon(1). F(0) has four main subunits: a(1), b(1), b'(1) and c(10-14). The alpha and beta chains form an alternating ring which encloses part of the gamma chain. F(1) is attached to F(0) by a central stalk formed by the gamma and epsilon chains, while a peripheral stalk is formed by the delta, b and b' chains.

It localises to the plastid. The protein localises to the chloroplast thylakoid membrane. Its function is as follows. F(1)F(0) ATP synthase produces ATP from ADP in the presence of a proton or sodium gradient. F-type ATPases consist of two structural domains, F(1) containing the extramembraneous catalytic core and F(0) containing the membrane proton channel, linked together by a central stalk and a peripheral stalk. During catalysis, ATP synthesis in the catalytic domain of F(1) is coupled via a rotary mechanism of the central stalk subunits to proton translocation. In terms of biological role, component of the F(0) channel, it forms part of the peripheral stalk, linking F(1) to F(0). This Ostreococcus tauri protein is ATP synthase subunit b, chloroplastic.